Consider the following 162-residue polypeptide: Solute carrier family 2, facilitated glucose transporter member 4 (162 aa).

The Extracellular segment spans residues 1 to 13 (TSIFETAGVGQPA). The helical transmembrane segment at 14–34 (YATIGAGVVNTVFTLVSVFLV) threads the bilayer. Residue N23 coordinates D-glucose. The Cytoplasmic portion of the chain corresponds to 35–43 (ERAGRRTLH). The helical transmembrane segment at 44–64 (LLGLAGMCGCAILMTIALLLL) threads the bilayer. The Extracellular segment spans residues 65–75 (ERLPAMSYVSI). Residues 76-96 (VAIFGFVAFFEIGPGPIPWFI) traverse the membrane as a helical segment. Positions 86 and 94 each coordinate D-glucose. Residues 97 to 107 (VAELFSQGPRP) are Cytoplasmic-facing. The chain crosses the membrane as a helical span at residues 108-128 (AAMAVAGFCNWTSNFIIGMGF). Topologically, residues 129–135 (QYIAXAM) are extracellular. The chain crosses the membrane as a helical span at residues 136–156 (GPYVFLLFAVLLLAFFIFTFL). Topologically, residues 157–162 (KVPETR) are cytoplasmic.

Belongs to the major facilitator superfamily. Sugar transporter (TC 2.A.1.1) family. Glucose transporter subfamily. As to quaternary structure, binds to DAXX. Interacts via its N-terminus with SRFBP1. Interacts with NDUFA9. Interacts with TRARG1; the interaction is required for proper SLC2A4 recycling after insulin stimulation. Post-translationally, sumoylated. Palmitoylated. Palmitoylation by ZDHHC7 controls the insulin-dependent translocation of GLUT4 to the plasma membrane.

The protein localises to the cell membrane. It localises to the endomembrane system. The protein resides in the cytoplasm. Its subcellular location is the perinuclear region. The catalysed reaction is D-glucose(out) = D-glucose(in). In terms of biological role, insulin-regulated facilitative glucose transporter, which plays a key role in removal of glucose from circulation. Response to insulin is regulated by its intracellular localization: in the absence of insulin, it is efficiently retained intracellularly within storage compartments in muscle and fat cells. Upon insulin stimulation, translocates from these compartments to the cell surface where it transports glucose from the extracellular milieu into the cell. This Canis lupus familiaris (Dog) protein is Solute carrier family 2, facilitated glucose transporter member 4.